The primary structure comprises 89 residues: Small ribosomal subunit protein uS15 (89 aa).

Belongs to the universal ribosomal protein uS15 family. In terms of assembly, part of the 30S ribosomal subunit. Forms a bridge to the 50S subunit in the 70S ribosome, contacting the 23S rRNA.

In terms of biological role, one of the primary rRNA binding proteins, it binds directly to 16S rRNA where it helps nucleate assembly of the platform of the 30S subunit by binding and bridging several RNA helices of the 16S rRNA. Its function is as follows. Forms an intersubunit bridge (bridge B4) with the 23S rRNA of the 50S subunit in the ribosome. This Bartonella quintana (strain Toulouse) (Rochalimaea quintana) protein is Small ribosomal subunit protein uS15.